Here is a 270-residue protein sequence, read N- to C-terminus: Thiazole synthase (270 aa).

Lysine 112 acts as the Schiff-base intermediate with DXP in catalysis. 1-deoxy-D-xylulose 5-phosphate-binding positions include glycine 173, 199 to 200 (AG), and 221 to 222 (NS).

This sequence belongs to the ThiG family. In terms of assembly, homotetramer. Forms heterodimers with either ThiH or ThiS.

The protein resides in the cytoplasm. It catalyses the reaction [ThiS sulfur-carrier protein]-C-terminal-Gly-aminoethanethioate + 2-iminoacetate + 1-deoxy-D-xylulose 5-phosphate = [ThiS sulfur-carrier protein]-C-terminal Gly-Gly + 2-[(2R,5Z)-2-carboxy-4-methylthiazol-5(2H)-ylidene]ethyl phosphate + 2 H2O + H(+). It participates in cofactor biosynthesis; thiamine diphosphate biosynthesis. Functionally, catalyzes the rearrangement of 1-deoxy-D-xylulose 5-phosphate (DXP) to produce the thiazole phosphate moiety of thiamine. Sulfur is provided by the thiocarboxylate moiety of the carrier protein ThiS. In vitro, sulfur can be provided by H(2)S. The protein is Thiazole synthase of Pseudomonas entomophila (strain L48).